The following is a 310-amino-acid chain: Protein LRATD2 (310 aa).

A disordered region spans residues 1 to 76; that stretch reads MGNQVEKLTH…PPPQPQPYDP (76 aa). The segment covering 54 to 64 has biased composition (gly residues); the sequence is PDGGGLPDGGD. The segment covering 65-74 has biased composition (pro residues); that stretch reads GPPPPQPQPY. The LRAT domain occupies 122 to 217; the sequence is VEFVSQAQYP…CRYGKREFKI (96 aa). Positions 274-310 are disordered; that stretch reads HPAEPEEGDSNVARTTPPPGRPPAPSSEEEDGEAVAH. Positions 289 to 298 are enriched in pro residues; that stretch reads TPPPGRPPAP. Acidic residues predominate over residues 300-310; that stretch reads SEEEDGEAVAH.

This sequence belongs to the LRATD family. Expressed in esophageal squamous cell carcinomas.

This is Protein LRATD2 from Homo sapiens (Human).